The primary structure comprises 372 residues: Queuine tRNA-ribosyltransferase (372 aa).

Residue aspartate 89 is the Proton acceptor of the active site. Substrate-binding positions include 89–93 (DSGGF), aspartate 161, and glycine 232. The tract at residues 262-268 (GIGDLPS) is RNA binding. The active-site Nucleophile is the aspartate 281. Residues 286–290 (TKAAR) are RNA binding; important for wobble base 34 recognition. 4 residues coordinate Zn(2+): cysteine 319, cysteine 321, cysteine 324, and histidine 351.

The protein belongs to the queuine tRNA-ribosyltransferase family. Homodimer. Within each dimer, one monomer is responsible for RNA recognition and catalysis, while the other monomer binds to the replacement base PreQ1. Zn(2+) serves as cofactor.

The catalysed reaction is 7-aminomethyl-7-carbaguanine + guanosine(34) in tRNA = 7-aminomethyl-7-carbaguanosine(34) in tRNA + guanine. It functions in the pathway tRNA modification; tRNA-queuosine biosynthesis. Functionally, catalyzes the base-exchange of a guanine (G) residue with the queuine precursor 7-aminomethyl-7-deazaguanine (PreQ1) at position 34 (anticodon wobble position) in tRNAs with GU(N) anticodons (tRNA-Asp, -Asn, -His and -Tyr). Catalysis occurs through a double-displacement mechanism. The nucleophile active site attacks the C1' of nucleotide 34 to detach the guanine base from the RNA, forming a covalent enzyme-RNA intermediate. The proton acceptor active site deprotonates the incoming PreQ1, allowing a nucleophilic attack on the C1' of the ribose to form the product. After dissociation, two additional enzymatic reactions on the tRNA convert PreQ1 to queuine (Q), resulting in the hypermodified nucleoside queuosine (7-(((4,5-cis-dihydroxy-2-cyclopenten-1-yl)amino)methyl)-7-deazaguanosine). The protein is Queuine tRNA-ribosyltransferase of Chlamydia trachomatis serovar A (strain ATCC VR-571B / DSM 19440 / HAR-13).